Here is a 153-residue protein sequence, read N- to C-terminus: 3-hydroxyacyl-[acyl-carrier-protein] dehydratase FabZ (153 aa).

Residue His47 is part of the active site.

The protein belongs to the thioester dehydratase family. FabZ subfamily.

The protein localises to the cytoplasm. It carries out the reaction a (3R)-hydroxyacyl-[ACP] = a (2E)-enoyl-[ACP] + H2O. In terms of biological role, involved in unsaturated fatty acids biosynthesis. Catalyzes the dehydration of short chain beta-hydroxyacyl-ACPs and long chain saturated and unsaturated beta-hydroxyacyl-ACPs. This is 3-hydroxyacyl-[acyl-carrier-protein] dehydratase FabZ from Myxococcus xanthus (strain DK1622).